The sequence spans 239 residues: Protein canopy homolog 4 (239 aa).

A signal peptide spans 1-20 (MGPVRLGTLLFILTVYGAWA). 3 disulfides stabilise this stretch: C37–C195, C40–C183, and C93–C155. The disordered stretch occupies residues 199-239 (TWTGKEKITDGQEKTEEEEQDQEEEEMTNTPVHSQHDPEDL). Residues 201-212 (TGKEKITDGQEK) are compositionally biased toward basic and acidic residues. Residues 213–225 (TEEEEQDQEEEEM) are compositionally biased toward acidic residues.

It belongs to the canopy family. As to quaternary structure, interacts with TLR4.

Its subcellular location is the secreted. Its function is as follows. Plays a role in the regulation of the cell surface expression of TLR4. The polypeptide is Protein canopy homolog 4 (CNPY4) (Bos taurus (Bovine)).